Reading from the N-terminus, the 178-residue chain is Probable inosine/xanthosine triphosphatase (178 aa).

Belongs to the YjjX NTPase family. In terms of assembly, homodimer. Mg(2+) is required as a cofactor. Requires Mn(2+) as cofactor.

The enzyme catalyses XTP + H2O = XDP + phosphate + H(+). The catalysed reaction is ITP + H2O = IDP + phosphate + H(+). Phosphatase that hydrolyzes non-canonical purine nucleotides such as XTP and ITP to their respective diphosphate derivatives. Probably excludes non-canonical purines from DNA/RNA precursor pool, thus preventing their incorporation into DNA/RNA and avoiding chromosomal lesions. The sequence is that of Probable inosine/xanthosine triphosphatase from Pyrobaculum calidifontis (strain DSM 21063 / JCM 11548 / VA1).